The sequence spans 83 residues: Defensin-2 (83 aa).

Residues 1-33 form the signal peptide; that stretch reads MAGKGVGTPLSALFLLVLLVVTIGMMEVQVAEG. 4 cysteine pairs are disulfide-bonded: C36-C82, C47-C67, C53-C76, and C57-C78.

The protein belongs to the DEFL family.

The protein resides in the secreted. Functionally, plant defense peptide. Has antifungal activity. This Pinus sylvestris (Scotch pine) protein is Defensin-2.